The following is a 347-amino-acid chain: MAWENQTFNSDFILLGIFNHSPPHTFLFFLVLGIFLVAFMGNSVMVLLIYLDTQLHTPMYFLLSQLSLMDLMLICTTVPKMAFNYLSGSKSISMAGCVTQIFFYISLSGSECFLLAVMAYDRYIAICHPLRYTNLMNPKICGLMATFSWILGSTDGIIDAVATFSFSFCGSREIAHFFCEFPSLLILSCNDTSIFEEVIFICCIVMLVFPVAIIIASYARVILAVIHMGSGEGRCKAFTTCSSHLMVVGMYYGAALFMYIRPTSDHSPTQDKMVSVFYTILTPMLNPLIYSLRNKEVTRAFMKILGKGKSESELPHKLYVLLFAKFFFLISIFFYDVKILALIMYIA.

Residues 1–25 are Extracellular-facing; it reads MAWENQTFNSDFILLGIFNHSPPHT. N-linked (GlcNAc...) asparagine glycosylation is present at asparagine 5. Residues 26 to 49 form a helical membrane-spanning segment; sequence FLFFLVLGIFLVAFMGNSVMVLLI. The Cytoplasmic segment spans residues 50–57; sequence YLDTQLHT. A helical transmembrane segment spans residues 58 to 79; the sequence is PMYFLLSQLSLMDLMLICTTVP. Topologically, residues 80 to 100 are extracellular; that stretch reads KMAFNYLSGSKSISMAGCVTQ. A disulfide bridge links cysteine 97 with cysteine 189. A helical transmembrane segment spans residues 101–120; it reads IFFYISLSGSECFLLAVMAY. Over 121 to 139 the chain is Cytoplasmic; sequence DRYIAICHPLRYTNLMNPK. A helical membrane pass occupies residues 140–158; that stretch reads ICGLMATFSWILGSTDGII. Over 159–195 the chain is Extracellular; the sequence is DAVATFSFSFCGSREIAHFFCEFPSLLILSCNDTSIF. An N-linked (GlcNAc...) asparagine glycan is attached at asparagine 190. A helical transmembrane segment spans residues 196–219; it reads EEVIFICCIVMLVFPVAIIIASYA. Residues 220 to 236 lie on the Cytoplasmic side of the membrane; sequence RVILAVIHMGSGEGRCK. The chain crosses the membrane as a helical span at residues 237–259; the sequence is AFTTCSSHLMVVGMYYGAALFMY. Residues 260–272 lie on the Extracellular side of the membrane; the sequence is IRPTSDHSPTQDK. Residues 273-292 traverse the membrane as a helical segment; sequence MVSVFYTILTPMLNPLIYSL. Over 293-347 the chain is Cytoplasmic; sequence RNKEVTRAFMKILGKGKSESELPHKLYVLLFAKFFFLISIFFYDVKILALIMYIA.

Belongs to the G-protein coupled receptor 1 family.

It is found in the cell membrane. Its function is as follows. Odorant receptor. The protein is Olfactory receptor 2M2 (OR2M2) of Homo sapiens (Human).